A 1070-amino-acid polypeptide reads, in one-letter code: DNA-directed RNA polymerase subunit beta (1070 aa).

The protein belongs to the RNA polymerase beta chain family. In terms of assembly, in plastids the minimal PEP RNA polymerase catalytic core is composed of four subunits: alpha, beta, beta', and beta''. When a (nuclear-encoded) sigma factor is associated with the core the holoenzyme is formed, which can initiate transcription.

The protein localises to the plastid. The protein resides in the chloroplast. The enzyme catalyses RNA(n) + a ribonucleoside 5'-triphosphate = RNA(n+1) + diphosphate. Functionally, DNA-dependent RNA polymerase catalyzes the transcription of DNA into RNA using the four ribonucleoside triphosphates as substrates. The protein is DNA-directed RNA polymerase subunit beta of Gossypium barbadense (Sea Island cotton).